The chain runs to 951 residues: Serine/threonine-protein phosphatase 4 regulatory subunit 1 (951 aa).

HEAT repeat units lie at residues 26–63 (ESDV…VFNR), 82–119 (RDCI…FCQE), 127–164 (AFSK…QELI), 168–206 (DVET…MVGK), 208–246 (ITER…VVGQ), 248–285 (ATEE…ATCQ), and 287–324 (IRRT…TFAN). Disordered stretches follow at residues 326-395 (SSSG…DMRV), 407-501 (SESP…MATR), 539-569 (HDEA…SISE), and 592-612 (GGAD…ERRP). Composition is skewed to basic and acidic residues over residues 332-360 (FKDE…RPED), 464-483 (DLDK…ERTG), and 539-551 (HDEA…RSEL). The HEAT 8 repeat unit spans residues 502-539 (KELEEMIENLEPHMDDPDVKAQVEVLSAALRASTLDAH). Positions 594–604 (ADVGPGGGGGF) are enriched in gly residues. HEAT repeat units lie at residues 699–735 (LTAA…LLHI), 777–815 (RDVY…KLHM), 820–858 (TFGV…DDCL), and 862–899 (QFAV…EKEY). A Phosphoserine modification is found at S936.

As to quaternary structure, serine/threonine-protein phosphatase 4 (PP4) occurs in different assemblies of the catalytic and one or more regulatory subunits. Component of the PP4 complex PPP4C-PPP4R1. Interacts with HDAC3.

Regulatory subunit of serine/threonine-protein phosphatase 4. May play a role in regulation of cell division in renal glomeruli. The PPP4C-PPP4R1 PP4 complex may play a role in dephosphorylation and regulation of HDAC3. Plays a role in the inhibition of TNF-induced NF-kappa-B activation by regulating the dephosphorylation of TRAF2. The polypeptide is Serine/threonine-protein phosphatase 4 regulatory subunit 1 (Ppp4r1) (Rattus norvegicus (Rat)).